Here is a 229-residue protein sequence, read N- to C-terminus: Ribulose-phosphate 3-epimerase (229 aa).

S13 is a binding site for substrate. A divalent metal cation-binding residues include H36, D38, and H69. D38 serves as the catalytic Proton acceptor. Residues H69, 145–148 (GFGG), 178–180 (DGG), and 200–201 (GS) each bind substrate. D178 contacts a divalent metal cation. D178 acts as the Proton donor in catalysis.

Belongs to the ribulose-phosphate 3-epimerase family. It depends on a divalent metal cation as a cofactor.

The enzyme catalyses D-ribulose 5-phosphate = D-xylulose 5-phosphate. It participates in carbohydrate degradation. Catalyzes the reversible epimerization of D-ribulose 5-phosphate to D-xylulose 5-phosphate. The protein is Ribulose-phosphate 3-epimerase of Mycobacterium bovis (strain ATCC BAA-935 / AF2122/97).